Reading from the N-terminus, the 424-residue chain is Exodeoxyribonuclease 7 large subunit (424 aa).

The protein belongs to the XseA family. As to quaternary structure, heterooligomer composed of large and small subunits.

The protein localises to the cytoplasm. It carries out the reaction Exonucleolytic cleavage in either 5'- to 3'- or 3'- to 5'-direction to yield nucleoside 5'-phosphates.. In terms of biological role, bidirectionally degrades single-stranded DNA into large acid-insoluble oligonucleotides, which are then degraded further into small acid-soluble oligonucleotides. In Cyanothece sp. (strain PCC 7425 / ATCC 29141), this protein is Exodeoxyribonuclease 7 large subunit.